Reading from the N-terminus, the 1756-residue chain is Multifunctional conjugation protein TraI (1756 aa).

The tract at residues 1–330 (MMSIAQVRSA…TQAIAGLSER (330 aa)) is DNA relaxase. Tyr-16 serves as the catalytic O-(5'-phospho-DNA)-tyrosine intermediate; for relaxase activity. The active-site Relaxase is the Tyr-17. Residues His-146, His-157, and His-159 each coordinate Mg(2+). Positions 950–1500 (GKEAVMPLME…LRDVAAGRAV (551 aa)) are DNA helicase I. An ATP-binding site is contributed by 992 to 999 (GYAGVGKT). The tract at residues 1534–1756 (RNGKSAGIWL…LQKEKTLGGD (223 aa)) is required for DNA transfer, may interact with TraM. Residues 1717-1753 (QRVREAVREIARENLLQERLQQMERDMVRDLQKEKTL) are a coiled coil.

It to TraI of plasmid IncFII R100. In terms of assembly, monomer. Part of the relaxosome, a complex composed of plasmid-encodes TraI, TraM, TraY and host-encoded IHF bound to the F plasmid origin of transfer (oriT). Directly contacts coupling protein TraD. Seems to directly contact TraM via its C-terminus. Mg(2+) is required as a cofactor.

Its subcellular location is the cytoplasm. It carries out the reaction ATP-independent breakage of single-stranded DNA, followed by passage and rejoining.. The enzyme catalyses ATP + H2O = ADP + phosphate + H(+). Its activity is regulated as follows. Nicking activity (relaxase) is inhibited by bisphosphonates such as the non-competitive inhibitor imidobisphosphate (PNP), etidronic acid (ETIDRO) and clodronic acid (CLODRO). The latter 2 are competitive inhibitors, and are already used clinically to treat bone loss (marketed as Didronel and Bonefos). All 3 compounds also inhibit conjugation and kill F plasmid-containing cells. They are specific to dual tyrosine relaxases such as those found in F and related R conjugative plasmids. In terms of biological role, conjugative DNA transfer (CDT) is the unidirectional transfer of ssDNA plasmid from a donor to a recipient cell. It is the central mechanism by which antibiotic resistance and virulence factors are propagated in bacterial populations. Part of the relaxosome, which facilitates a site- and strand-specific cut in the origin of transfer by TraI, at the nic site. Relaxosome formation requires binding of IHF and TraY to the oriT region, which then facilitates binding of TraI relaxase. TraI forms a covalent 5'-phosphotyrosine intermediate linkage to the ssDNA. The transesterified T-strand moves from the donor cell to the recipient cell in a 5'to 3' direction, with the DNA helicase activity of TraI unwinding the DNA. DNA transfer occurs via the conjugative pore (transferosome) an intercellular junction mediated by a type IV secretion system, with TraD providing the means to link the relaxosome to the conjugative pore. The relaxase completes DNA transfer by reversing the covalent phosphotyrosine linkage and releasing the T-strand. Functionally, traI has also been identified as DNA helicase I. DNA. helicase I is a potent, highly processive DNA-dependent ATPase, able to unwind about 1.1 kb dsDNA per second in a 5' to 3' manner. In Escherichia coli (strain K12), this protein is Multifunctional conjugation protein TraI (traI).